The sequence spans 238 residues: Ribosomal RNA small subunit methyltransferase G (238 aa).

S-adenosyl-L-methionine contacts are provided by residues Gly-77, Phe-82, 128 to 129 (AE), and Arg-147.

The protein belongs to the methyltransferase superfamily. RNA methyltransferase RsmG family.

It is found in the cytoplasm. Functionally, specifically methylates the N7 position of guanine in position 535 of 16S rRNA. This Lysinibacillus sphaericus (strain C3-41) protein is Ribosomal RNA small subunit methyltransferase G.